The sequence spans 193 residues: MIYGSLDHGFIEVIVGPMFSGKSEELIRRIKRAQIAKQKVQVFKPAIDDRYSIDKVVSHNGTNINAISVVKAFEIIELLEEDTEVIAIDEIQFFDHSIVDVVREIADLGKRVICAGLDMDFRGEPFGPTPDVMAIAESVDKLTAICVKCGNPATRTQRLINGKPAKYDDPIILVGAHETYEARCRKCHEVPRT.

ATP is bound by residues 16–23 (GPMFSGKS) and 89–92 (DEIQ). Glu-90 acts as the Proton acceptor in catalysis. Positions 146, 149, 184, and 187 each coordinate Zn(2+).

This sequence belongs to the thymidine kinase family. In terms of assembly, homotetramer.

It localises to the cytoplasm. The catalysed reaction is thymidine + ATP = dTMP + ADP + H(+). In Thermoanaerobacter pseudethanolicus (strain ATCC 33223 / 39E) (Clostridium thermohydrosulfuricum), this protein is Thymidine kinase.